The chain runs to 654 residues: Probable protein phosphatase 2C 23 (654 aa).

The interval 11-30 is disordered; that stretch reads CLTGGAGRNKKPELSILEPD. The residue at position 147 (S147) is a Phosphoserine. The PPM-type phosphatase domain maps to 243–645; it reads DVSLESQNLQ…DDVSIVVISL (403 aa). Mn(2+)-binding residues include D280 and G281. Residues 309-336 form a disordered region; that stretch reads DDPKTDAKSSDEADVENRDSSSEKKSKN. D573 and D636 together coordinate Mn(2+).

The protein belongs to the PP2C family. Mg(2+) serves as cofactor. It depends on Mn(2+) as a cofactor. Expressed in seedlings, roots, leaves, stems, young inflorescences, flowers and siliques.

The protein localises to the nucleus. It carries out the reaction O-phospho-L-seryl-[protein] + H2O = L-seryl-[protein] + phosphate. The catalysed reaction is O-phospho-L-threonyl-[protein] + H2O = L-threonyl-[protein] + phosphate. Functionally, involved in leaf development regulation. The polypeptide is Probable protein phosphatase 2C 23 (PLL4) (Arabidopsis thaliana (Mouse-ear cress)).